A 360-amino-acid polypeptide reads, in one-letter code: Glutamate 5-kinase (360 aa).

Residue lysine 7 coordinates ATP. Residues serine 47, aspartate 134, and asparagine 146 each coordinate substrate. ATP is bound by residues 166–167 (TD) and 208–214 (TGGIKTK). One can recognise a PUA domain in the interval 273 to 344 (VGEIHLDDGA…IGINSRSETT (72 aa)).

It belongs to the glutamate 5-kinase family.

It is found in the cytoplasm. The enzyme catalyses L-glutamate + ATP = L-glutamyl 5-phosphate + ADP. It functions in the pathway amino-acid biosynthesis; L-proline biosynthesis; L-glutamate 5-semialdehyde from L-glutamate: step 1/2. Functionally, catalyzes the transfer of a phosphate group to glutamate to form L-glutamate 5-phosphate. The protein is Glutamate 5-kinase of Prochlorococcus marinus (strain NATL2A).